The primary structure comprises 407 residues: MMIDGLPTLDDIPYRGKHVLLRVDINAPIVNSTILDTSRFESHIPTIEALEDSKLVLLAHQSRPGKKDFTSLESHASTLSKLLGKRVEYIDEIFSKGVLRRIKEMENGEVILLENVRFYSEEQLNRSAEEHAECHMVRKLSTAFDLFVNDAFSASHRSHASLVGFVPVLPSVVGRLVENEVTALSKPLKGEGRKIFVLGGAKIKDSVKVLKNVLENNIAEKVVLTGVVANYFLMLKGYDIGEVNRKVVEDNKEDVSDEEMINILKKYSDKIILPIDLGIEKDGVRVDIPLEKFDGKYRIMDIGLETVNQLSEIIPKYDYVVLNGPAGVFEDERFSLGTYEILRAATRAGYSVVGGGHIASAARLFGLSDKFSHISTAGGACIRFLSGEKLVALEVIKEYWAKKWGKS.

Substrate-binding positions include 24–26 (DIN), Arg39, 60–63 (HQSR), Arg117, and Arg157. ATP-binding positions include Glu330 and 355-358 (GGHI).

This sequence belongs to the phosphoglycerate kinase family.

It is found in the cytoplasm. The enzyme catalyses (2R)-3-phosphoglycerate + ATP = (2R)-3-phospho-glyceroyl phosphate + ADP. It functions in the pathway carbohydrate degradation; glycolysis; pyruvate from D-glyceraldehyde 3-phosphate: step 2/5. The protein is Phosphoglycerate kinase (pgk) of Archaeoglobus fulgidus (strain ATCC 49558 / DSM 4304 / JCM 9628 / NBRC 100126 / VC-16).